The primary structure comprises 340 residues: MKKKLLVLTMSTLFATQIMNSNHAKASVTESVDKKFVVPESGINKIIPAYDEFKNSPKVNVSNLTDNKNFVASEDKLNKIADSSAASKIVDKNFVVPESKLGNIVPEYKEINNRVNVATNNPASQQVDKHFVAKGPEVNRFITQNKVNHHFITTQTHYKKVITSYKSTHVHKHVNHAKDSINKHFIVKPSESPRYTHPSQSLIIKHHFAVPGYHAHKFVTPGHASIKINHFCVVPQINSFKVIPPYGHNSHRMHVPSFQNNTTATHQNAKVNKAYDYKYFYSYKVVKGVKKYFSFSQSNGYKIGKPSLNIKNVNYQYAVPSYSPTHYVPEFKGSLPAPRV.

The signal sequence occupies residues 1–26 (MKKKLLVLTMSTLFATQIMNSNHAKA).

The protein resides in the cell surface. Adhesin that binds to the host cell extracellular matrix proteins fibronectin, fibrinogen, collagen, and vitronectin. This Staphylococcus aureus (strain USA300) protein is Extracellular matrix protein-binding protein emp (emp).